We begin with the raw amino-acid sequence, 580 residues long: M-phase inducer phosphatase 2 (580 aa).

Residues 1–24 (MEVPQPEPAPGSALSPAGVCGGAQ) are disordered. Position 42 is a phosphoserine (Ser-42). Over residues 89 to 107 (SLSRRASESSLSSESSESS) the composition is skewed to low complexity. Disordered stretches follow at residues 89-117 (SLSR…DSPS) and 165-196 (NITN…ENDG). Position 169 is a phosphoserine; by MELK (Ser-169). Position 249 is a phosphoserine (Ser-249). Ser-323 is subject to Phosphoserine; by MELK and MAPK14. A disordered region spans residues 331-370 (PILKRLERPQDRDTPVQNKRRRSVTPPEEQQEAEEPKARV). Positions 334 to 344 (KRLERPQDRDT) are enriched in basic and acidic residues. At Ser-353 the chain carries Phosphoserine; by AURKA. Ser-375 carries the post-translational modification Phosphoserine; by BRSK1 and MAPK14. A Rhodanese domain is found at 431-538 (IVDKFVIVDC…FFPQHPNFCE (108 aa)). Phosphoserine is present on Ser-470. Cys-487 is a catalytic residue. Phosphoserine is present on Ser-563.

The protein belongs to the MPI phosphatase family. Interacts with MAPK14 and 14-3-3 proteins. In terms of processing, phosphorylated by BRSK1 in vitro. Phosphorylated by CHEK1, which inhibits the activity of this protein. Phosphorylation at Ser-353 by AURKA might locally participate in the control of the onset of mitosis. Phosphorylation by MELK at Ser-169 promotes localization to the centrosome and the spindle poles during mitosis. Phosphorylation at Ser-323 and Ser-375 by MAPK14 is required for binding to 14-3-3 proteins.

The protein resides in the cytoplasm. Its subcellular location is the cytoskeleton. The protein localises to the microtubule organizing center. It localises to the centrosome. It is found in the spindle pole. The catalysed reaction is O-phospho-L-tyrosyl-[protein] + H2O = L-tyrosyl-[protein] + phosphate. Stimulated by B-type cyclins. In terms of biological role, tyrosine protein phosphatase which functions as a dosage-dependent inducer of mitotic progression. Directly dephosphorylates CDK1 and stimulates its kinase activity. Required for G2/M phases of the cell cycle progression and abscission during cytokinesis in a ECT2-dependent manner. The three isoforms seem to have a different level of activity. The protein is M-phase inducer phosphatase 2 (CDC25B) of Homo sapiens (Human).